A 241-amino-acid polypeptide reads, in one-letter code: DnaA regulatory inactivator Hda (241 aa).

This sequence belongs to the DnaA family. HdA subfamily. The active form seems to be an ADP-bound monomer. Forms the RIDA complex (regulatory inactivation of DnaA) of ATP-DnaA, ADP-Hda and the DNA-loaded beta sliding clamp (dnaN).

In terms of biological role, mediates the interaction of DNA replication initiator protein DnaA with DNA polymerase subunit beta sliding clamp (dnaN). Stimulates hydrolysis of ATP-DnaA to ADP-DnaA, rendering DnaA inactive for reinitiation, a process called regulatory inhibition of DnaA or RIDA. This is DnaA regulatory inactivator Hda from Salmonella paratyphi A (strain ATCC 9150 / SARB42).